Reading from the N-terminus, the 64-residue chain is Large ribosomal subunit protein bL28 (64 aa).

This sequence belongs to the bacterial ribosomal protein bL28 family.

The polypeptide is Large ribosomal subunit protein bL28 (rpmB) (Mycobacterium leprae (strain TN)).